The following is a 218-amino-acid chain: Elongation factor Ts (218 aa).

Residues 82-85 are involved in Mg(2+) ion dislocation from EF-Tu; that stretch reads TDFV.

Belongs to the EF-Ts family.

It is found in the cytoplasm. Functionally, associates with the EF-Tu.GDP complex and induces the exchange of GDP to GTP. It remains bound to the aminoacyl-tRNA.EF-Tu.GTP complex up to the GTP hydrolysis stage on the ribosome. The chain is Elongation factor Ts from Picosynechococcus sp. (strain ATCC 27264 / PCC 7002 / PR-6) (Agmenellum quadruplicatum).